The following is a 287-amino-acid chain: 4-diphosphocytidyl-2-C-methyl-D-erythritol kinase (287 aa).

The active site involves Lys-12. 95-105 is an ATP binding site; that stretch reads PAQAGMGGGSS. Asp-137 is a catalytic residue.

Belongs to the GHMP kinase family. IspE subfamily.

The catalysed reaction is 4-CDP-2-C-methyl-D-erythritol + ATP = 4-CDP-2-C-methyl-D-erythritol 2-phosphate + ADP + H(+). It functions in the pathway isoprenoid biosynthesis; isopentenyl diphosphate biosynthesis via DXP pathway; isopentenyl diphosphate from 1-deoxy-D-xylulose 5-phosphate: step 3/6. Its function is as follows. Catalyzes the phosphorylation of the position 2 hydroxy group of 4-diphosphocytidyl-2C-methyl-D-erythritol. The sequence is that of 4-diphosphocytidyl-2-C-methyl-D-erythritol kinase from Delftia acidovorans (strain DSM 14801 / SPH-1).